The sequence spans 184 residues: NADH-quinone oxidoreductase subunit B (184 aa).

The [4Fe-4S] cluster site is built by cysteine 63, cysteine 64, cysteine 128, and cysteine 158.

Belongs to the complex I 20 kDa subunit family. In terms of assembly, NDH-1 is composed of 14 different subunits. Subunits NuoB, C, D, E, F, and G constitute the peripheral sector of the complex. Requires [4Fe-4S] cluster as cofactor.

It localises to the cell inner membrane. The enzyme catalyses a quinone + NADH + 5 H(+)(in) = a quinol + NAD(+) + 4 H(+)(out). In terms of biological role, NDH-1 shuttles electrons from NADH, via FMN and iron-sulfur (Fe-S) centers, to quinones in the respiratory chain. Couples the redox reaction to proton translocation (for every two electrons transferred, four hydrogen ions are translocated across the cytoplasmic membrane), and thus conserves the redox energy in a proton gradient. The chain is NADH-quinone oxidoreductase subunit B from Xanthomonas campestris pv. campestris (strain 8004).